The following is a 435-amino-acid chain: Maltodextrin transport system permease protein MdxF (435 aa).

Transmembrane regions (helical) follow at residues 35 to 55 (LLFL…GIQA), 73 to 93 (FMLI…MFYI), 136 to 156 (AYIM…FVAL), 199 to 219 (VIWT…TALF), 234 to 254 (IFLF…SNMF), 293 to 313 (LIMI…TGVL), 337 to 357 (HITF…QYTF), and 403 to 423 (VAAA…LIAF). Residues 195–422 (LGWTVIWTIC…FIVIGISLIA (228 aa)) enclose the ABC transmembrane type-1 domain.

The protein belongs to the binding-protein-dependent transport system permease family. MalFG subfamily. As to quaternary structure, the complex is composed of two ATP-binding proteins (MsmX), two transmembrane proteins (MdxF and MdxG) and a solute-binding protein (MdxE).

The protein resides in the cell membrane. In terms of biological role, part of the ABC transporter complex involved in maltodextrin import. Probably responsible for the translocation of the substrate across the membrane. The polypeptide is Maltodextrin transport system permease protein MdxF (mdxF) (Bacillus subtilis (strain 168)).